The chain runs to 324 residues: HTH-type transcriptional regulator CysB (324 aa).

An HTH lysR-type domain is found at 1 to 59 (MKLQQLRYIVEVVNHNLNVSSTAEGLYTSQPGISKQVRMLEDELGIQIFSRSGKHLTQV). The H-T-H motif DNA-binding region spans 19 to 38 (VSSTAEGLYTSQPGISKQVR).

The protein belongs to the LysR transcriptional regulatory family. Homotetramer.

Its subcellular location is the cytoplasm. In terms of biological role, this protein is a positive regulator of gene expression for the cysteine regulon. The inducer for CysB is N-acetylserine. In Escherichia coli O157:H7, this protein is HTH-type transcriptional regulator CysB (cysB).